The following is a 727-amino-acid chain: MTQAQHDAAPITTGTNQTASVFSFDVRPDKIGIITINVPGEKVNTLKAEFVDQFLNVFKQAQQSSGLKGLILISGKPDTFIAGADISMIAGCKTKEDARDLAEKGQKLFSQIANYPLPVVAAIHGACLGGGLELALACHWRVCSQDDKTRLGLPEVQLGLLPGSGGTQRLPRLIGVSSALDIMLTGKQLRAKQALRLGLVDDAVPLDILLDIAIEKVKKGIPVRKPLPWQQRLLVGPVGRYFLFNIVRKKTLAKTRGHYPAPERIIEVVKEGLEKGMSQGLRAEAVAFGELAMTRESAALRNLFFAATSLKNETGSSEKPAKIKHVGILGGGLMGGGIANVTATRGKLPVRIKDINEKGISQVLKYTWDLLSKRVKQKRLRPAERAQQMMLISGTTDYRGFAQTDIVVEAVFEDLSLKQKMVAEIETNAKPETIFASNTSSLPIHQIAEKAQRPEQVIGLHYFSPVDKMPLVEVIPHQGTSEKTIATAVSLAKKQGKTAIVVGDKAGFYVNRILVPYISEAAHCLVAGEPIDHIDGALVNFGFPVGPINLLDEVGIDVGTKIMPVLVEQLGPRFAAPESLDAVLKDGRKGRKNGRGFYLYAPGPRKFWQFGKRDKKVDSSVYTLLNITPESHMLSSEIAQRCVMLMLNEAVRCLDEGIIRSPRDGDIGAVFGIGFPPFFGGPFRYIDSLGCARVVEILRRLESQYGDRFVPCECLVNMAEQNKSFYP.

The segment at 16 to 205 (NQTASVFSFD…RLGLVDDAVP (190 aa)) is enoyl-CoA hydratase. A 3-hydroxyacyl-CoA dehydrogenase region spans residues 321 to 727 (AKIKHVGILG…MAEQNKSFYP (407 aa)).

This sequence in the N-terminal section; belongs to the enoyl-CoA hydratase/isomerase family. It in the central section; belongs to the 3-hydroxyacyl-CoA dehydrogenase family. As to quaternary structure, heterotetramer of two alpha chains (FadJ) and two beta chains (FadI).

The protein localises to the cytoplasm. The catalysed reaction is a (3S)-3-hydroxyacyl-CoA = a (2E)-enoyl-CoA + H2O. It carries out the reaction a 4-saturated-(3S)-3-hydroxyacyl-CoA = a (3E)-enoyl-CoA + H2O. The enzyme catalyses a (3S)-3-hydroxyacyl-CoA + NAD(+) = a 3-oxoacyl-CoA + NADH + H(+). It catalyses the reaction (3S)-3-hydroxybutanoyl-CoA = (3R)-3-hydroxybutanoyl-CoA. It functions in the pathway lipid metabolism; fatty acid beta-oxidation. Catalyzes the formation of a hydroxyacyl-CoA by addition of water on enoyl-CoA. Also exhibits 3-hydroxyacyl-CoA epimerase and 3-hydroxyacyl-CoA dehydrogenase activities. The sequence is that of Fatty acid oxidation complex subunit alpha from Photorhabdus laumondii subsp. laumondii (strain DSM 15139 / CIP 105565 / TT01) (Photorhabdus luminescens subsp. laumondii).